Reading from the N-terminus, the 1078-residue chain is Disheveled-associated activator of morphogenesis 1 (1078 aa).

A Phosphoserine modification is found at S34. In terms of domain architecture, GBD/FH3 spans 45-420 (LPMPPVEELD…QIVIQNDKGQ (376 aa)). Positions 437–526 (RMLVNENEVK…ELSRRAVCAS (90 aa)) form a coiled coil. Disordered regions lie at residues 456 to 480 (RKEH…TQEK) and 524 to 585 (CASI…PLGA). An FH1 domain is found at 528-599 (PGGPSPGAPG…PGAPMGLALK (72 aa)). Composition is skewed to pro residues over residues 530–539 (GPSPGAPGGP) and 548–585 (LLPP…PLGA). Residues 600–1009 (KKSIPQPTNA…EERRARMEAQ (410 aa)) form the FH2 domain. Residues 693 to 702 (AQNCNILLSR) form an actin-binding region. Over residues 987–1027 (KQENENMRKKKEEEERRARMEAQLKEQRERERKMRKAKENS) the composition is skewed to basic and acidic residues. 2 disordered regions span residues 987 to 1034 (KQEN…GEFD) and 1055 to 1078 (RNRK…KLNF). S1027 and S1030 each carry phosphoserine. The region spanning 1027–1058 (SEESGEFDDLVSALRSGEVFDKDLSKLKRNRK) is the DAD domain. Basic and acidic residues predominate over residues 1067-1078 (SSRERPITKLNF).

Belongs to the formin homology family. As to quaternary structure, homodimer. Interacts with CIP4, FNBP1 and FNBP1L. Interacts with the SH3 domains of Abl, BTK, endophilin, spectrin and SRC. Binds specifically to GTP-bound CDC42 and RHOA. Interacts with INTU; INTU mediates the indirect interaction between DAAM1 and NPHP4. Interacts (via coiled coil domain) with KANK1 (via coiled coil domain). Expressed in all tissues examined.

It localises to the cytoplasm. The protein resides in the cytoskeleton. Its subcellular location is the cilium basal body. Binds to disheveled (Dvl) and Rho, and mediates Wnt-induced Dvl-Rho complex formation. May play a role as a scaffolding protein to recruit Rho-GDP and Rho-GEF, thereby enhancing Rho-GTP formation. Can direct nucleation and elongation of new actin filaments. Involved in building functional cilia. Involved in the organization of the subapical actin network in multiciliated epithelial cells. Together with DAAM2, required for myocardial maturation and sarcomere assembly. During cell division, may regulate RHOA activation that signals spindle orientation and chromosomal segregation. This is Disheveled-associated activator of morphogenesis 1 (DAAM1) from Homo sapiens (Human).